A 520-amino-acid polypeptide reads, in one-letter code: Cytochrome P450 4F2 (520 aa).

A propeptide spanning residues 1–4 (MSQL) is cleaved from the precursor. Heme-binding residues include Glu328 and Cys468.

This sequence belongs to the cytochrome P450 family. Heme is required as a cofactor. Liver. Also present in kidney: specifically expressed in the S2 and S3 segments of proximal tubules in cortex and outer medulla.

It is found in the microsome membrane. Its subcellular location is the endoplasmic reticulum membrane. The catalysed reaction is an organic molecule + reduced [NADPH--hemoprotein reductase] + O2 = an alcohol + oxidized [NADPH--hemoprotein reductase] + H2O + H(+). The enzyme catalyses (5Z,8Z,11Z,14Z)-eicosatetraenoate + reduced [NADPH--hemoprotein reductase] + O2 = 20-hydroxy-(5Z,8Z,11Z,14Z)-eicosatetraenoate + oxidized [NADPH--hemoprotein reductase] + H2O + H(+). It carries out the reaction (5Z,8Z,11Z)-eicosatrienoate + reduced [NADPH--hemoprotein reductase] + O2 = 20-hydroxy-(5Z,8Z,11Z)-eicosatrienoate + oxidized [NADPH--hemoprotein reductase] + H2O + H(+). It catalyses the reaction (5Z,8Z,11Z,14Z,17Z)-eicosapentaenoate + reduced [NADPH--hemoprotein reductase] + O2 = 20-hydroxy-(5Z,8Z,11Z,14Z,17Z)-eicosapentaenoate + oxidized [NADPH--hemoprotein reductase] + H2O + H(+). The catalysed reaction is (4Z,7Z,10Z,13Z,16Z,19Z)-docosahexaenoate + reduced [NADPH--hemoprotein reductase] + O2 = 22-hydroxy-(4Z,7Z,10Z,13Z,16Z,19Z)-docosahexaenoate + oxidized [NADPH--hemoprotein reductase] + H2O + H(+). The enzyme catalyses 8,9-epoxy-(5Z,11Z,14Z)-eicosatrienoate + reduced [NADPH--hemoprotein reductase] + O2 = 20-hydroxy-8,9-epoxy-(5Z,11Z,14Z)-eicosatrienoate + oxidized [NADPH--hemoprotein reductase] + H2O + H(+). It carries out the reaction (9S,10R)-epoxy-octadecanoate + reduced [NADPH--hemoprotein reductase] + O2 = 18-hydroxy-(9S,10R)-epoxy-octadecanoate + oxidized [NADPH--hemoprotein reductase] + H2O + H(+). It catalyses the reaction (9R,10S)-epoxy-octadecanoate + reduced [NADPH--hemoprotein reductase] + O2 = 18-hydroxy-(9R,10S)-epoxy-octadecanoate + oxidized [NADPH--hemoprotein reductase] + H2O + H(+). The catalysed reaction is 12,13-epoxy-(9Z)-octadecenoate + reduced [NADPH--hemoprotein reductase] + O2 = 18-hydroxy-12,13-epoxy-(9Z)-octadecenoate + oxidized [NADPH--hemoprotein reductase] + H2O + H(+). The enzyme catalyses 9,10-epoxy-(12Z)-octadecenoate + reduced [NADPH--hemoprotein reductase] + O2 = 18-hydroxy-9,10-epoxy-(12Z)-octadecenoate + oxidized [NADPH--hemoprotein reductase] + H2O + H(+). It carries out the reaction 8-hydroxy-(5Z,9E,11Z,14Z)-eicosatetraenoate + reduced [NADPH--hemoprotein reductase] + O2 = 8,20-dihydroxy-(5Z,9E,11Z,14Z)-eicosatetraenoate + oxidized [NADPH--hemoprotein reductase] + H2O + H(+). It catalyses the reaction 12-hydroxy-(5Z,8Z,10E,14Z)-eicosatetraenoate + reduced [NADPH--hemoprotein reductase] + O2 = 12,20-dihydroxy-(5Z,8Z,10E,14Z)-eicosatetraenoate + oxidized [NADPH--hemoprotein reductase] + H2O + H(+). The catalysed reaction is 12-hydroxyoctadecanoate + reduced [NADPH--hemoprotein reductase] + O2 = 12,18-dihydroxyoctadecanoate + oxidized [NADPH--hemoprotein reductase] + H2O + H(+). The enzyme catalyses docosanoate + reduced [NADPH--hemoprotein reductase] + O2 = 22-hydroxydocosanoate + oxidized [NADPH--hemoprotein reductase] + H2O + H(+). It carries out the reaction 22-hydroxydocosanoate + reduced [NADPH--hemoprotein reductase] + O2 = 22-oxodocosanoate + oxidized [NADPH--hemoprotein reductase] + 2 H2O + H(+). It catalyses the reaction 22-oxodocosanoate + reduced [NADPH--hemoprotein reductase] + O2 = docosanedioate + oxidized [NADPH--hemoprotein reductase] + H2O + 2 H(+). The catalysed reaction is tetracosanoate + reduced [NADPH--hemoprotein reductase] + O2 = 24-hydroxytetracosanoate + oxidized [NADPH--hemoprotein reductase] + H2O + H(+). The enzyme catalyses hexacosanoate + reduced [NADPH--hemoprotein reductase] + O2 = 26-hydroxyhexacosanoate + oxidized [NADPH--hemoprotein reductase] + H2O + H(+). It carries out the reaction 26-hydroxyhexacosanoate + reduced [NADPH--hemoprotein reductase] + O2 = 26-oxohexacosanoate + oxidized [NADPH--hemoprotein reductase] + 2 H2O + H(+). It catalyses the reaction 26-oxohexacosanoate + reduced [NADPH--hemoprotein reductase] + O2 = hexacosanedioate + oxidized [NADPH--hemoprotein reductase] + H2O + 2 H(+). The catalysed reaction is 3-hydroxyoctadecanoate + reduced [NADPH--hemoprotein reductase] + O2 = 3,18-dihydroxyoctadecanoate + oxidized [NADPH--hemoprotein reductase] + H2O + H(+). The enzyme catalyses 3-hydroxyhexadecanoate + reduced [NADPH--hemoprotein reductase] + O2 = 3,16-dihydroxyhexadecanoate + oxidized [NADPH--hemoprotein reductase] + H2O + H(+). It carries out the reaction leukotriene B4 + reduced [NADPH--hemoprotein reductase] + O2 = 20-hydroxy-leukotriene B4 + oxidized [NADPH--hemoprotein reductase] + H2O + H(+). It catalyses the reaction 6-trans-leukotriene B4 + reduced [NADPH--hemoprotein reductase] + O2 = 20-hydroxy-6-trans-leukotriene B4 + oxidized [NADPH--hemoprotein reductase] + H2O + H(+). The catalysed reaction is lipoxin A4 + reduced [NADPH--hemoprotein reductase] + O2 = 20-hydroxy-lipoxin A4 + oxidized [NADPH--hemoprotein reductase] + H2O + H(+). The enzyme catalyses menaquinone-4 + reduced [NADPH--hemoprotein reductase] + O2 = omega-hydroxymenaquinone-4 + oxidized [NADPH--hemoprotein reductase] + H2O + H(+). It carries out the reaction phylloquinone + reduced [NADPH--hemoprotein reductase] + O2 = omega-hydroxyphylloquinone + oxidized [NADPH--hemoprotein reductase] + H2O + H(+). It catalyses the reaction (+)-alpha-tocopherol + reduced [NADPH--hemoprotein reductase] + O2 = 13-hydroxy-alpha-tocopherol + oxidized [NADPH--hemoprotein reductase] + H2O + H(+). The catalysed reaction is gamma-tocopherol + NADPH + O2 + H(+) = 13-hydroxy-gamma-tocopherol + NADP(+) + H2O. It participates in lipid metabolism; arachidonate metabolism. The protein operates within lipid metabolism; leukotriene B4 degradation. Its pathway is cofactor degradation; phylloquinone degradation. With respect to regulation, inhibited by dietary sesamin. In terms of biological role, a cytochrome P450 monooxygenase involved in the metabolism of various endogenous substrates, including fatty acids, eicosanoids and vitamins. Mechanistically, uses molecular oxygen inserting one oxygen atom into a substrate, and reducing the second into a water molecule, with two electrons provided by NADPH via cytochrome P450 reductase (CPR; NADPH-ferrihemoprotein reductase). Catalyzes predominantly the oxidation of the terminal carbon (omega-oxidation) of long- and very long-chain fatty acids. Displays high omega-hydroxylase activity toward polyunsaturated fatty acids (PUFAs). Participates in the conversion of arachidonic acid to omega-hydroxyeicosatetraenoic acid (20-HETE), a signaling molecule acting both as vasoconstrictive and natriuretic with overall effect on arterial blood pressure. Plays a role in the oxidative inactivation of eicosanoids, including both pro-inflammatory and anti-inflammatory mediators such as leukotriene B4 (LTB4), lipoxin A4 (LXA4), and several HETEs. Catalyzes omega-hydroxylation of 3-hydroxy fatty acids. Converts monoepoxides of linoleic acid leukotoxin and isoleukotoxin to omega-hydroxylated metabolites. Contributes to the degradation of very long-chain fatty acids (VLCFAs) by catalyzing successive omega-oxidations and chain shortening. Plays an important role in vitamin metabolism by chain shortening. Catalyzes omega-hydroxylation of the phytyl chain of tocopherols (forms of vitamin E), with preference for gamma-tocopherols over alpha-tocopherols, thus promoting retention of alpha-tocopherols in tissues. Omega-hydroxylates and inactivates phylloquinone (vitamin K1), and menaquinone-4 (MK-4, a form of vitamin K2), both acting as cofactors in blood coagulation. The sequence is that of Cytochrome P450 4F2 from Homo sapiens (Human).